The following is a 552-amino-acid chain: Indole-3-pyruvate decarboxylase (552 aa).

A thiamine diphosphate-binding site is contributed by Glu-52. Residues 385–466 are thiamine pyrophosphate binding; the sequence is TSAFGAIDLR…ILVLNNEGYT (82 aa). 2 residues coordinate Mg(2+): Asp-435 and Asn-462.

This sequence belongs to the TPP enzyme family. In terms of assembly, homotetramer. Requires a metal cation as cofactor. The cofactor is thiamine diphosphate.

The enzyme catalyses indole-3-pyruvate + H(+) = indole-3-acetaldehyde + CO2. It functions in the pathway plant hormone metabolism; auxin biosynthesis. This is Indole-3-pyruvate decarboxylase (ipdC) from Enterobacter cloacae.